A 187-amino-acid chain; its full sequence is Elongation factor P (187 aa).

At Lys34 the chain carries N6-(3,6-diaminohexanoyl)-5-hydroxylysine.

It belongs to the elongation factor P family. May be beta-lysylated on the epsilon-amino group of Lys-34 by the combined action of EpmA and EpmB, and then hydroxylated on the C5 position of the same residue by EpmC (if this protein is present). Lysylation is critical for the stimulatory effect of EF-P on peptide-bond formation. The lysylation moiety may extend toward the peptidyltransferase center and stabilize the terminal 3-CCA end of the tRNA. Hydroxylation of the C5 position on Lys-34 may allow additional potential stabilizing hydrogen-bond interactions with the P-tRNA.

It is found in the cytoplasm. The protein operates within protein biosynthesis; polypeptide chain elongation. Functionally, involved in peptide bond synthesis. Alleviates ribosome stalling that occurs when 3 or more consecutive Pro residues or the sequence PPG is present in a protein, possibly by augmenting the peptidyl transferase activity of the ribosome. Modification of Lys-34 is required for alleviation. The chain is Elongation factor P from Buchnera aphidicola subsp. Schizaphis graminum (strain Sg).